The following is a 442-amino-acid chain: Endothelin receptor type B (442 aa).

An N-terminal signal peptide occupies residues 1–26 (MQSSASRCGRALVALLLACGLLGVWG). At 27-101 (EKRGFPPAQA…RKIEINKTFK (75 aa)) the chain is on the extracellular side. N-linked (GlcNAc...) asparagine glycans are attached at residues Asn-60 and Asn-97. A helical transmembrane segment spans residues 102 to 126 (YINTIVSCLVFVLGIIGNSTLLRII). Topologically, residues 127-137 (YKNKCMRNGPN) are cytoplasmic. The helical transmembrane segment at 138-163 (ILIASLALGDLLHIIIDIPINAYKLL) threads the bilayer. The Extracellular portion of the chain corresponds to 164–175 (AGDWPFGAEMCK). Cys-174 and Cys-255 are disulfide-bonded. A helical membrane pass occupies residues 176–197 (LVPFIQKASVGITVLSLCALSI). Residues 198–218 (DRYRAVASWSRIKGIGVPKWT) are Cytoplasmic-facing. The chain crosses the membrane as a helical span at residues 219 to 243 (AVEIVLIWVVSVVLAVPEAIGFDVI). Topologically, residues 244–271 (TSDYKGKPLRVCMLNPFQKTAFMQFYKT) are extracellular. Residues 272–296 (AKDWWLFSFYFCLPLAITAIFYTLM) form a helical membrane-spanning segment. Over 297–324 (TCEMLRKKSGMQIALNDHLKQRREVAKT) the chain is Cytoplasmic. Ser-305 bears the Phosphoserine mark. Residues 325-350 (VFCLVLVFALCWLPLHLSRILKLTLY) traverse the membrane as a helical segment. Residues 351–362 (DQSNPQRCELLS) are Extracellular-facing. The helical transmembrane segment at 363–389 (FLLVLDYIGINMASLNSCINPIALYLV) threads the bilayer. At 390 to 442 (SKRFKNCFKSCLCCWCQTFEEKQSLEEKQSCLKFKANDHGYDNFRSSNKYSSS) the chain is on the cytoplasmic side. S-palmitoyl cysteine attachment occurs at residues Cys-402, Cys-403, and Cys-405. Ser-419 carries the post-translational modification Phosphoserine. At Tyr-439 the chain carries Phosphotyrosine. Ser-440, Ser-441, and Ser-442 each carry phosphoserine.

It belongs to the G-protein coupled receptor 1 family. Endothelin receptor subfamily. EDNRB sub-subfamily. Widely distributed in cell types of a variety of tissues.

It is found in the cell membrane. In terms of biological role, non-specific receptor for endothelin 1, 2, and 3. Mediates its action by association with G proteins that activate a phosphatidylinositol-calcium second messenger system. The polypeptide is Endothelin receptor type B (Rattus norvegicus (Rat)).